Reading from the N-terminus, the 359-residue chain is Glucose 1-dehydrogenase (359 aa).

Residue cysteine 39 participates in Zn(2+) binding. Threonine 41 lines the substrate pocket. 2 residues coordinate Zn(2+): histidine 64 and glutamate 65. Substrate contacts are provided by glutamate 116 and glutamate 152. Glutamate 152 contacts Zn(2+). NADP(+) is bound at residue 183–186 (AGPI).

The protein belongs to the zinc-containing alcohol dehydrogenase family. Glucose 1-dehydrogenase subfamily. Zn(2+) serves as cofactor.

It catalyses the reaction D-glucose + NAD(+) = D-glucono-1,5-lactone + NADH + H(+). The catalysed reaction is D-glucose + NADP(+) = D-glucono-1,5-lactone + NADPH + H(+). Functionally, catalyzes the NAD(P)(+)-dependent oxidation of D-glucose to D-gluconate via gluconolactone. Can utilize both NAD(+) and NADP(+) as electron acceptor. Is involved in the degradation of glucose through a non-phosphorylative variant of the Entner-Doudoroff pathway. This is Glucose 1-dehydrogenase from Methanocella arvoryzae (strain DSM 22066 / NBRC 105507 / MRE50).